A 746-amino-acid polypeptide reads, in one-letter code: Exostosin-1 (746 aa).

Residues 1–7 lie on the Cytoplasmic side of the membrane; it reads MQAKKRY. A helical; Signal-anchor for type II membrane protein transmembrane segment spans residues 8-28; that stretch reads FILLSAGSCLALLFYFGGLQF. Over 29–746 the chain is Lumenal; the sequence is RASRSHSRRE…RKKYRDIERL (718 aa). A glycan (N-linked (GlcNAc...) asparagine) is linked at Asn-89. 2 disulfides stabilise this stretch: Cys-98-Cys-103 and Cys-109-Cys-152. A protein contacts are provided by Leu-166 and Tyr-203. The UDP site is built by Lys-267, Lys-269, Tyr-271, and Arg-280. Cys-298 and Cys-312 form a disulfide bridge. Residue His-300 participates in a protein binding. UDP contacts are provided by Tyr-319 and Tyr-324. The N-linked (GlcNAc...) asparagine glycan is linked to Asn-330. 2 disulfide bridges follow: Cys-334–Cys-355 and Cys-652–Cys-704. Arg-346 and Glu-349 together coordinate UDP.

It belongs to the glycosyltransferase 47 family. Part of the heparan sulfate polymerase, a dimeric complex composed of EXT1 and EXT2. Could also form homooligomeric complexes. Interacts with NDST1. Post-translationally, N-glycosylated.

The protein localises to the golgi apparatus membrane. It localises to the golgi apparatus. The protein resides in the cis-Golgi network membrane. It is found in the endoplasmic reticulum membrane. The catalysed reaction is 3-O-{alpha-D-GlcNAc-[(1-&gt;4)-beta-D-GlcA-(1-&gt;4)-alpha-D-GlcNAc](n)-(1-&gt;4)-beta-D-GlcA-(1-&gt;3)-beta-D-Gal-(1-&gt;3)-beta-D-Gal-(1-&gt;4)-beta-D-Xyl}-L-seryl-[protein] + UDP-alpha-D-glucuronate = 3-O-{[(1-&gt;4)-beta-D-GlcA-(1-&gt;4)-alpha-D-GlcNAc](n+1)-(1-&gt;4)-beta-D-GlcA-(1-&gt;3)-beta-D-Gal-(1-&gt;3)-beta-D-Gal-(1-&gt;4)-beta-D-Xyl}-L-seryl-[protein] + UDP + H(+). Its pathway is protein modification; protein glycosylation. In terms of biological role, glycosyltransferase forming with EXT2 the heterodimeric heparan sulfate polymerase which catalyzes the elongation of the heparan sulfate glycan backbone. Glycan backbone extension consists in the alternating transfer of (1-&gt;4)-beta-D-GlcA and (1-&gt;4)-alpha-D-GlcNAc residues from their respective UDP-sugar donors. Both EXT1 and EXT2 are required for the full activity of the polymerase since EXT1 bears the N-acetylglucosaminyl-proteoglycan 4-beta-glucuronosyltransferase activity within the complex while EXT2 carries the glucuronosyl-N-acetylglucosaminyl-proteoglycan 4-alpha-N-acetylglucosaminyltransferase activity. Heparan sulfate proteoglycans are ubiquitous components of the extracellular matrix and play an important role in tissue homeostasis and signaling. This chain is Exostosin-1 (EXT1), found in Pongo abelii (Sumatran orangutan).